The following is a 287-amino-acid chain: Lipoyl synthase (287 aa).

The [4Fe-4S] cluster site is built by Cys38, Cys43, Cys49, Cys64, Cys68, Cys71, and Ser277. The Radical SAM core domain maps to Trp50–Arg266.

The protein belongs to the radical SAM superfamily. Lipoyl synthase family. It depends on [4Fe-4S] cluster as a cofactor.

The protein localises to the cytoplasm. The catalysed reaction is [[Fe-S] cluster scaffold protein carrying a second [4Fe-4S](2+) cluster] + N(6)-octanoyl-L-lysyl-[protein] + 2 oxidized [2Fe-2S]-[ferredoxin] + 2 S-adenosyl-L-methionine + 4 H(+) = [[Fe-S] cluster scaffold protein] + N(6)-[(R)-dihydrolipoyl]-L-lysyl-[protein] + 4 Fe(3+) + 2 hydrogen sulfide + 2 5'-deoxyadenosine + 2 L-methionine + 2 reduced [2Fe-2S]-[ferredoxin]. Its pathway is protein modification; protein lipoylation via endogenous pathway; protein N(6)-(lipoyl)lysine from octanoyl-[acyl-carrier-protein]: step 2/2. Catalyzes the radical-mediated insertion of two sulfur atoms into the C-6 and C-8 positions of the octanoyl moiety bound to the lipoyl domains of lipoate-dependent enzymes, thereby converting the octanoylated domains into lipoylated derivatives. The polypeptide is Lipoyl synthase (Chlorobium phaeobacteroides (strain DSM 266 / SMG 266 / 2430)).